The sequence spans 193 residues: Ganglioside GM2 activator (193 aa).

Positions M1 to P20 are cleaved as a signal peptide. Intrachain disulfides connect C39–C183, C99–C106, C112–C138, and C125–C136. The N-linked (GlcNAc...) asparagine glycan is linked to N151.

Widely expressed. Most abundant in kidney and testis.

The protein resides in the lysosome. It carries out the reaction cholesterol(in) = cholesterol(out). In terms of biological role, binds gangliosides and stimulates ganglioside GM2 degradation. It stimulates only the breakdown of ganglioside GM2 and glycolipid GA2 by beta-hexosaminidase A. It extracts single GM2 molecules from membranes and presents them in soluble form to beta-hexosaminidase A for cleavage of N-acetyl-D-galactosamine and conversion to GM3. The large binding pocket can accommodate several single chain phospholipids and fatty acids, GM2A also exhibits some calcium-independent phospholipase activity. Has cholesterol transfer activity. The chain is Ganglioside GM2 activator from Mus musculus (Mouse).